The primary structure comprises 272 residues: Acetylglutamate kinase (272 aa).

Substrate-binding positions include 46 to 47 (GA), Arg68, and Asn166.

Belongs to the acetylglutamate kinase family. ArgB subfamily.

The protein localises to the cytoplasm. It catalyses the reaction N-acetyl-L-glutamate + ATP = N-acetyl-L-glutamyl 5-phosphate + ADP. It participates in amino-acid biosynthesis; L-arginine biosynthesis; N(2)-acetyl-L-ornithine from L-glutamate: step 2/4. Its function is as follows. Catalyzes the ATP-dependent phosphorylation of N-acetyl-L-glutamate. This is Acetylglutamate kinase from Dehalococcoides mccartyi (strain CBDB1).